Consider the following 457-residue polypeptide: MLGVEALRNERSRLRQEIADLRSAICKKEQSLRELEEALANGGGNGDGLADEGGERNTGTIQTQLTNDDIARYSRQLILPNFGVQGQLRLKNSSVLIVGMGGLGCPAAQYLAAAGVGYLGLIDYDQVERSNFHRQTLHTEARCGMAKTESARIALLELNPSCRIHCHSELINSHNASNIMRSYDVVLDCSDNVATRYLLNDACVIFRKPLVSGSALKMDGQLTVYNYGAQGPCYRCIYPVPPPPEAVTNCGDGGVLGAVTGVIGSLQALETIKIIVGGLGEVLAGRMLIFDGTTGQFRNIRIRSKRSNCHACSSQPLITDLIDYELFCGMHATDKDHPLQLLESDQRLDVQTYHDKLESQPHLLFDVRSTAEFEICQLSTNAINLPLAEVLDDSYLKRFAVELQNKDLPIIVLCRRGNDSQIAVQHMRNRFPDHSIRDLIGGLHAWTRKVDPDFPIY.

The tract at residues 40-60 (ANGGGNGDGLADEGGERNTGT) is disordered. T63 carries the phosphothreonine modification. Residues G102, D123, 130-134 (SNFHR), K147, and 191-192 (DN) each bind ATP. C233 and C236 together coordinate Zn(2+). C250 acts as the Glycyl thioester intermediate; for adenylyltransferase activity in catalysis. Zn(2+) is bound by residues C309 and C312. The Rhodanese domain occupies 358–455 (ESQPHLLFDV…WTRKVDPDFP (98 aa)). The active-site Cysteine persulfide intermediate; for sulfurtransferase activity is the C414.

This sequence in the N-terminal section; belongs to the HesA/MoeB/ThiF family. UBA4 subfamily. It depends on Zn(2+) as a cofactor.

The protein resides in the cytoplasm. It localises to the cytosol. The enzyme catalyses [molybdopterin-synthase sulfur-carrier protein]-C-terminal Gly-Gly + ATP + H(+) = [molybdopterin-synthase sulfur-carrier protein]-C-terminal Gly-Gly-AMP + diphosphate. It catalyses the reaction [molybdopterin-synthase sulfur-carrier protein]-C-terminal Gly-Gly-AMP + S-sulfanyl-L-cysteinyl-[cysteine desulfurase] + AH2 = [molybdopterin-synthase sulfur-carrier protein]-C-terminal-Gly-aminoethanethioate + L-cysteinyl-[cysteine desulfurase] + A + AMP + 2 H(+). The protein operates within tRNA modification; 5-methoxycarbonylmethyl-2-thiouridine-tRNA biosynthesis. It functions in the pathway cofactor biosynthesis; molybdopterin biosynthesis. Functionally, plays a central role in 2-thiolation of mcm(5)S(2)U at tRNA wobble positions of cytosolic tRNA(Lys), tRNA(Glu) and tRNA(Gln). Also essential during biosynthesis of the molybdenum cofactor. Acts by mediating the C-terminal thiocarboxylation of sulfur carriers URM1 and MOCS2A. Its N-terminus first activates URM1 and MOCS2A as acyl-adenylates (-COAMP), then the persulfide sulfur on the catalytic cysteine is transferred to URM1 and MOCS2A to form thiocarboxylation (-COSH) of their C-terminus. The reaction probably involves hydrogen sulfide that is generated from the persulfide intermediate and that acts as a nucleophile towards URM1 and MOCS2A. Subsequently, a transient disulfide bond is formed. Does not use thiosulfate as sulfur donor; NFS1 probably acting as a sulfur donor for thiocarboxylation reactions. The protein is Adenylyltransferase and sulfurtransferase MOCS3 of Drosophila willistoni (Fruit fly).